The following is a 1312-amino-acid chain: DNA repair protein RAD50 (1312 aa).

ATP-binding residues include Arg-13, Asn-36, Gly-37, Gly-39, Lys-40, Thr-41, Thr-42, Ile-65, Asp-67, and Gln-158. Thr-41 contributes to the Mg(2+) binding site. Gln-158 provides a ligand contact to Mg(2+). Coiled coils occupy residues Thr-185 to Arg-347 and Gln-403 to Asp-558. Ser-469 is modified (phosphoserine). Thr-568 carries the phosphothreonine modification. Residues Asp-640–Leu-678 are a coiled coil. Residues Asp-640 to Ile-741 enclose the Zinc-hook domain. 2 residues coordinate Zn(2+): Cys-687 and Cys-690. 2 coiled-coil regions span residues Asp-712–Ile-741 and Leu-787–Lys-1108.

It belongs to the SMC family. RAD50 subfamily. As to quaternary structure, component of the MRN complex composed of two heterodimers RAD50 and MRE11 associated with a single XRS2. The MRN complexes dimerize on DNA to form joined MRN-MRN oligomers required for DNA double-strand break repair. Requires Zn(2+) as cofactor.

The protein resides in the nucleus. Its subcellular location is the chromosome. The enzyme catalyses ATP + H2O = ADP + phosphate + H(+). In terms of biological role, component of the MRN complex, which plays a central role in double-strand break (DSB) repair, DNA recombination, maintenance of telomere integrity and meiosis. The MRN complex is involved in the repair of DNA double-strand breaks (DSBs) via homologous recombination (HR), an error-free mechanism which primarily occurs during S and G2 phases. The complex (1) mediates the end resection of damaged DNA, which generates proper single-stranded DNA, a key initial steps in HR, and is (2) required for the recruitment of other repair factors and efficient activation of TEL1/ATM and ATR upon DNA damage. The MRN complex possesses single-strand endonuclease activity and double-strand-specific 3'-5' exonuclease activity, which are provided by MRE11, to initiate end resection, which is required for single-strand invasion and recombination. Within the complex, RAD50 is both required to bind DNA ends and hold them in close proximity and regulate the activity of MRE11. RAD50 provides an ATP-dependent control of MRE11 by positioning DNA ends into the MRE11 active site: ATP-binding induces a large structural change from an open form with accessible MRE11 nuclease sites into a closed form. The MRN complex is also required for the processing of R-loops. The polypeptide is DNA repair protein RAD50 (Saccharomyces cerevisiae (strain ATCC 204508 / S288c) (Baker's yeast)).